The sequence spans 172 residues: Nicotinamide-nucleotide adenylyltransferase (172 aa).

Belongs to the archaeal NMN adenylyltransferase family.

The protein localises to the cytoplasm. The enzyme catalyses beta-nicotinamide D-ribonucleotide + ATP + H(+) = diphosphate + NAD(+). The protein operates within cofactor biosynthesis; NAD(+) biosynthesis; NAD(+) from nicotinamide D-ribonucleotide: step 1/1. The polypeptide is Nicotinamide-nucleotide adenylyltransferase (Methanococcus vannielii (strain ATCC 35089 / DSM 1224 / JCM 13029 / OCM 148 / SB)).